The sequence spans 279 residues: Ankyrin repeat domain-containing protein 7 (279 aa).

Residues 1–11 (MKKFFPFRGKR) are compositionally biased toward basic residues. The tract at residues 1–25 (MKKFFPFRGKRKTDDSHSHSSEVPI) is disordered. ANK repeat units lie at residues 80 to 109 (RSRTPLHLACANGYTNIVSLLIENQCKINV), 113 to 142 (ENRTPLIKAVECQQESCATVLLLHGADPNL), 146 to 175 (YSNTALHYAVCGQNISLANKLLQYKANLEA), 179 to 208 (DGHTPLLLAVAENNENMVKFLLKKGADVNA), and 212 to 241 (NHRTAIMIALIVEPTSSVKLLLQQDTDLAH).

The protein is Ankyrin repeat domain-containing protein 7 (Ankrd7) of Mus musculus (Mouse).